The following is a 193-amino-acid chain: Dephospho-CoA kinase (193 aa).

A DPCK domain is found at 5–193 (IIGLTGGIAS…KKVERFCETI (189 aa)). 13-18 (ASGKST) serves as a coordination point for ATP.

Belongs to the CoaE family.

It is found in the cytoplasm. The enzyme catalyses 3'-dephospho-CoA + ATP = ADP + CoA + H(+). The protein operates within cofactor biosynthesis; coenzyme A biosynthesis; CoA from (R)-pantothenate: step 5/5. Catalyzes the phosphorylation of the 3'-hydroxyl group of dephosphocoenzyme A to form coenzyme A. This is Dephospho-CoA kinase from Fusobacterium nucleatum subsp. nucleatum (strain ATCC 25586 / DSM 15643 / BCRC 10681 / CIP 101130 / JCM 8532 / KCTC 2640 / LMG 13131 / VPI 4355).